The following is a 198-amino-acid chain: Nucleoid occlusion factor SlmA (198 aa).

One can recognise an HTH tetR-type domain in the interval 9–70 (RNRREEILQA…SLIEFIEDSL (62 aa)). The segment at residues 33 to 52 (TTAKLAANVGVSEAALYRHF) is a DNA-binding region (H-T-H motif). The stretch at 117–144 (EQDRLQGRINQLFERIEAQLRQVLKERK) forms a coiled coil.

This sequence belongs to the nucleoid occlusion factor SlmA family. In terms of assembly, homodimer. Interacts with FtsZ.

The protein resides in the cytoplasm. It localises to the nucleoid. Required for nucleoid occlusion (NO) phenomenon, which prevents Z-ring formation and cell division over the nucleoid. Acts as a DNA-associated cell division inhibitor that binds simultaneously chromosomal DNA and FtsZ, and disrupts the assembly of FtsZ polymers. SlmA-DNA-binding sequences (SBS) are dispersed on non-Ter regions of the chromosome, preventing FtsZ polymerization at these regions. This is Nucleoid occlusion factor SlmA from Serratia proteamaculans (strain 568).